We begin with the raw amino-acid sequence, 76 residues long: DNA-binding protein S1FA2 (76 aa).

Positions Pro-50 to Lys-55 match the Nuclear localization signal motif. Over residues Pro-51–Lys-66 the composition is skewed to basic residues. A disordered region spans residues Pro-51–Glu-76.

The protein belongs to the S1FA transcription factor family.

The protein localises to the nucleus. DNA-binding protein that specifically recognizes a negative element (S1F) within the RPS1 promoter. The sequence is that of DNA-binding protein S1FA2 (S1FA2) from Arabidopsis thaliana (Mouse-ear cress).